We begin with the raw amino-acid sequence, 449 residues long: Phosphoglucosamine mutase (449 aa).

Ser104 functions as the Phosphoserine intermediate in the catalytic mechanism. Mg(2+) contacts are provided by Ser104, Asp243, Asp245, and Asp247. Ser104 is modified (phosphoserine).

This sequence belongs to the phosphohexose mutase family. Requires Mg(2+) as cofactor. Post-translationally, activated by phosphorylation.

It carries out the reaction alpha-D-glucosamine 1-phosphate = D-glucosamine 6-phosphate. Its function is as follows. Catalyzes the conversion of glucosamine-6-phosphate to glucosamine-1-phosphate. The chain is Phosphoglucosamine mutase from Xanthomonas euvesicatoria pv. vesicatoria (strain 85-10) (Xanthomonas campestris pv. vesicatoria).